A 135-amino-acid polypeptide reads, in one-letter code: MASLKDLEGKWRLVESHGFEDYMKELGVGLALRKMGAMAKPDCIITLDGNNLTVKTESTVKTTVFSCTLGEKFDETTADGRKTETVCTFTDGALVQHQKWEGKESTITRKLKDGKMVVECVMNNAICTRVYEKVQ.

Alanine 2 is modified (N-acetylalanine). Serine 3 is modified (phosphoserine). Positions lysine 24–lysine 34 match the Nuclear localization signal motif. N-eicosanoyl ethanolamine is bound by residues cysteine 43 and arginine 109. The cysteines at positions 120 and 127 are disulfide-linked. Arginine 129–tyrosine 131 lines the (9Z,12Z)-octadecadienoate pocket. Tyrosine 131 is a binding site for N-eicosanoyl ethanolamine. Tyrosine 131 provides a ligand contact to hexadecanoate. Tyrosine 131 is subject to Phosphotyrosine.

Belongs to the calycin superfamily. Fatty-acid binding protein (FABP) family. Monomer.

The protein resides in the cytoplasm. The protein localises to the nucleus. It localises to the synapse. It is found in the postsynaptic density. Its subcellular location is the secreted. The catalysed reaction is hexadecanoate(out) = hexadecanoate(in). It carries out the reaction (9Z,12Z)-octadecadienoate(out) = (9Z,12Z)-octadecadienoate(in). The enzyme catalyses (9Z)-octadecenoate(out) = (9Z)-octadecenoate(in). Its function is as follows. Intracellular carrier for long-chain fatty acids and related active lipids, such as endocannabinoids, that regulate the metabolism and actions of the ligands they bind. In addition to the cytosolic transport, selectively delivers specific fatty acids from the cytosol to the nucleus, wherein they activate nuclear receptors. Delivers retinoic acid to the nuclear receptor peroxisome proliferator-activated receptor delta; which promotes proliferation and survival. May also serve as a synaptic carrier of endocannabinoid at central synapses and thus controls retrograde endocannabinoid signaling. Modulates inflammation by regulating PTGES induction via NF-kappa-B activation, and prostaglandin E2 (PGE2) biosynthesis during inflammation. In Rattus norvegicus (Rat), this protein is Fatty acid-binding protein 5.